Reading from the N-terminus, the 127-residue chain is Aspartate 1-decarboxylase (127 aa).

The Schiff-base intermediate with substrate; via pyruvic acid role is filled by Ser-25. Ser-25 carries the pyruvic acid (Ser) modification. Residue Thr-57 participates in substrate binding. The Proton donor role is filled by Tyr-58. 73-75 (GAA) is a binding site for substrate.

This sequence belongs to the PanD family. In terms of assembly, heterooctamer of four alpha and four beta subunits. Pyruvate serves as cofactor. In terms of processing, is synthesized initially as an inactive proenzyme, which is activated by self-cleavage at a specific serine bond to produce a beta-subunit with a hydroxyl group at its C-terminus and an alpha-subunit with a pyruvoyl group at its N-terminus.

Its subcellular location is the cytoplasm. It carries out the reaction L-aspartate + H(+) = beta-alanine + CO2. Its pathway is cofactor biosynthesis; (R)-pantothenate biosynthesis; beta-alanine from L-aspartate: step 1/1. In terms of biological role, catalyzes the pyruvoyl-dependent decarboxylation of aspartate to produce beta-alanine. The sequence is that of Aspartate 1-decarboxylase from Neisseria meningitidis serogroup A / serotype 4A (strain DSM 15465 / Z2491).